The sequence spans 613 residues: ADP-ribosylation factor-binding protein GGA2 (613 aa).

A VHS domain is found at 33–163; it reads ATDPSMSEQD…MLKKQGIIKQ (131 aa). A GAT domain is found at 188–315; that stretch reads DEEKSKLLTR…GVLLYKQVME (128 aa). A unstructured hinge region spans residues 316 to 483; it reads GRVTFGNRVT…VFVPLESVKP (168 aa). 2 disordered regions span residues 389–414 and 435–466; these read GQNCCEEKRNPSSSTLPGGGVQNPSA and SQKSVPKEVPPGTKSSPGWSWEAGPLAPSPSS. Polar residues predominate over residues 399-414; sequence PSSSTLPGGGVQNPSA. Residue Ser400 is modified to Phosphoserine. The region spanning 484–605 is the GAE domain; sequence SSLPPLIVYD…SEVGEVKDFP (122 aa).

The protein belongs to the GGA protein family. Monomer. Interacts with NECAP1, TSG101, UBC and AFTPH/aftiphilin. Interacts with CNST. Interacts with GGA1 and GGA3. Binds to clathrin and activated ARFs, such as ARF1, ARF5 and ARF6. Binds RABEP1 and RABGEF1. Interacts with the type-I membrane proteins LRP3, M6PR/CD-MPR, IGF2R/CI-MPR and BACE1. Interacts (via N-terminal VHS domain) with SORL1/sorLA and SORT1 (via C-terminal cytosolic domain). Binds the accessory proteins CCDC91, P200, SYNRG, EPN4 and NECAP2. Interacts with ADRA2B. Interacts (via VHS domain) with PIK4B; the interaction is important for PIK4B location at the Golgi apparatus membrane. Post-translationally, ubiquitinated. Ubiquitously expressed.

It is found in the golgi apparatus. The protein localises to the trans-Golgi network membrane. Its subcellular location is the endosome membrane. It localises to the early endosome membrane. Its function is as follows. Plays a role in protein sorting and trafficking between the trans-Golgi network (TGN) and endosomes. Mediates the ARF-dependent recruitment of clathrin to the TGN and binds ubiquitinated proteins and membrane cargo molecules with a cytosolic acidic cluster-dileucine (DXXLL) motif. Mediates export of the GPCR receptor ADRA2B to the cell surface. Regulates retrograde transport of phosphorylated form of BACE1 from endosomes to the trans-Golgi network. In Homo sapiens (Human), this protein is ADP-ribosylation factor-binding protein GGA2 (GGA2).